We begin with the raw amino-acid sequence, 213 residues long: MILNIGLIDYGMGNLHSVEQSFKRLNQSLKIISGPNDLSNCDALILPGVGSFDPAMKNLQQTNLIPELKKWVLNNKPLLGICLGLQLLFESSDEGKSKGLGLLKGTIKHLPKSEKQLIPHMGWAELNQDKECPLFKSNSSPQWMYFVHSYSAIPSDKNDIASSVNFGDEKITAVVWKKKLAACQFHPEKSGRSGELLLSNWLAWLKKETKDLY.

The region spanning 4-211 (NIGLIDYGMG…LAWLKKETKD (208 aa)) is the Glutamine amidotransferase type-1 domain. The Nucleophile role is filled by Cys-82. Active-site residues include His-186 and Glu-188.

In terms of assembly, heterodimer of HisH and HisF.

Its subcellular location is the cytoplasm. The enzyme catalyses 5-[(5-phospho-1-deoxy-D-ribulos-1-ylimino)methylamino]-1-(5-phospho-beta-D-ribosyl)imidazole-4-carboxamide + L-glutamine = D-erythro-1-(imidazol-4-yl)glycerol 3-phosphate + 5-amino-1-(5-phospho-beta-D-ribosyl)imidazole-4-carboxamide + L-glutamate + H(+). It carries out the reaction L-glutamine + H2O = L-glutamate + NH4(+). The protein operates within amino-acid biosynthesis; L-histidine biosynthesis; L-histidine from 5-phospho-alpha-D-ribose 1-diphosphate: step 5/9. Its function is as follows. IGPS catalyzes the conversion of PRFAR and glutamine to IGP, AICAR and glutamate. The HisH subunit catalyzes the hydrolysis of glutamine to glutamate and ammonia as part of the synthesis of IGP and AICAR. The resulting ammonia molecule is channeled to the active site of HisF. This Prochlorococcus marinus (strain SARG / CCMP1375 / SS120) protein is Imidazole glycerol phosphate synthase subunit HisH.